Consider the following 151-residue polypeptide: Deoxyuridine 5'-triphosphate nucleotidohydrolase (151 aa).

Residues 70–72 (RSG), N83, 87–89 (LID), and M97 contribute to the substrate site.

It belongs to the dUTPase family. The cofactor is Mg(2+).

It carries out the reaction dUTP + H2O = dUMP + diphosphate + H(+). It functions in the pathway pyrimidine metabolism; dUMP biosynthesis; dUMP from dCTP (dUTP route): step 2/2. Its function is as follows. This enzyme is involved in nucleotide metabolism: it produces dUMP, the immediate precursor of thymidine nucleotides and it decreases the intracellular concentration of dUTP so that uracil cannot be incorporated into DNA. The sequence is that of Deoxyuridine 5'-triphosphate nucleotidohydrolase from Actinobacillus pleuropneumoniae serotype 5b (strain L20).